Reading from the N-terminus, the 32-residue chain is Hyaluronidase-Pk1a (32 aa).

Asn-23 carries N-linked (GlcNAc...) asparagine glycosylation.

It belongs to the glycosyl hydrolase 56 family. As to expression, expressed by the venom gland.

The protein resides in the secreted. It carries out the reaction Random hydrolysis of (1-&gt;4)-linkages between N-acetyl-beta-D-glucosamine and D-glucuronate residues in hyaluronate.. Its function is as follows. Hydrolyzes high molecular weight hyaluronic acid to produce small oligosaccharides. The sequence is that of Hyaluronidase-Pk1a from Phoneutria keyserlingi (Brazilian wandering spider).